Consider the following 496-residue polypeptide: Cytosol aminopeptidase (496 aa).

The Mn(2+) site is built by Lys258 and Asp263. Lys270 is a catalytic residue. Asp281, Asp340, and Glu342 together coordinate Mn(2+). The active site involves Arg344.

Belongs to the peptidase M17 family. It depends on Mn(2+) as a cofactor.

Its subcellular location is the cytoplasm. It catalyses the reaction Release of an N-terminal amino acid, Xaa-|-Yaa-, in which Xaa is preferably Leu, but may be other amino acids including Pro although not Arg or Lys, and Yaa may be Pro. Amino acid amides and methyl esters are also readily hydrolyzed, but rates on arylamides are exceedingly low.. The enzyme catalyses Release of an N-terminal amino acid, preferentially leucine, but not glutamic or aspartic acids.. Presumably involved in the processing and regular turnover of intracellular proteins. Catalyzes the removal of unsubstituted N-terminal amino acids from various peptides. The polypeptide is Cytosol aminopeptidase (pepA) (Helicobacter pylori (strain J99 / ATCC 700824) (Campylobacter pylori J99)).